Reading from the N-terminus, the 259-residue chain is Hydroxyacylglutathione hydrolase (259 aa).

Residues His-56, His-58, Asp-60, His-61, His-112, Asp-133, and His-171 each coordinate Zn(2+).

This sequence belongs to the metallo-beta-lactamase superfamily. Glyoxalase II family. Monomer. Zn(2+) is required as a cofactor.

The enzyme catalyses an S-(2-hydroxyacyl)glutathione + H2O = a 2-hydroxy carboxylate + glutathione + H(+). The protein operates within secondary metabolite metabolism; methylglyoxal degradation; (R)-lactate from methylglyoxal: step 2/2. Its function is as follows. Thiolesterase that catalyzes the hydrolysis of S-D-lactoyl-glutathione to form glutathione and D-lactic acid. The polypeptide is Hydroxyacylglutathione hydrolase (Pseudomonas putida (strain GB-1)).